A 279-amino-acid polypeptide reads, in one-letter code: NADH dehydrogenase [ubiquinone] iron-sulfur protein 3, mitochondrial (279 aa).

A mitochondrion-targeting transit peptide spans 1–27 (MISRTLLKRSLPTVQFLRPFTRSSIRR). The segment at 249 to 279 (EPVGEGKDFTPESFKLPTPEPEPEKESDEKK) is disordered. Positions 270 to 279 (EPEKESDEKK) are enriched in basic and acidic residues.

Belongs to the complex I 30 kDa subunit family. As to quaternary structure, core subunit of respiratory chain NADH dehydrogenase (Complex I).

It localises to the mitochondrion inner membrane. The enzyme catalyses a ubiquinone + NADH + 5 H(+)(in) = a ubiquinol + NAD(+) + 4 H(+)(out). Functionally, core subunit of the mitochondrial membrane respiratory chain NADH dehydrogenase (Complex I) which catalyzes electron transfer from NADH through the respiratory chain, using ubiquinone as an electron acceptor. Plays a role in cell wall integrity and is involved in osmotic and oxidative resistance, yeast to hypha transition and the ability to damage and invade oral epithelial cells. The protein is NADH dehydrogenase [ubiquinone] iron-sulfur protein 3, mitochondrial (ALI1) of Candida albicans (strain SC5314 / ATCC MYA-2876) (Yeast).